The primary structure comprises 281 residues: 2,3,4,5-tetrahydropyridine-2,6-dicarboxylate N-succinyltransferase (281 aa).

It belongs to the transferase hexapeptide repeat family.

It is found in the cytoplasm. The catalysed reaction is (S)-2,3,4,5-tetrahydrodipicolinate + succinyl-CoA + H2O = (S)-2-succinylamino-6-oxoheptanedioate + CoA. Its pathway is amino-acid biosynthesis; L-lysine biosynthesis via DAP pathway; LL-2,6-diaminopimelate from (S)-tetrahydrodipicolinate (succinylase route): step 1/3. This is 2,3,4,5-tetrahydropyridine-2,6-dicarboxylate N-succinyltransferase from Methylobacterium sp. (strain 4-46).